Reading from the N-terminus, the 119-residue chain is Large ribosomal subunit protein bL20 (119 aa).

The protein belongs to the bacterial ribosomal protein bL20 family.

Binds directly to 23S ribosomal RNA and is necessary for the in vitro assembly process of the 50S ribosomal subunit. It is not involved in the protein synthesizing functions of that subunit. The chain is Large ribosomal subunit protein bL20 from Legionella pneumophila (strain Paris).